The chain runs to 563 residues: Membrane protein insertase YidC (563 aa).

Residues 6–26 form a helical membrane-spanning segment; it reads TVLWMIFSFSLLLLWNNWQIH. A disordered region spans residues 36-70; it reads PAPEAAATQQPKADANGTAASSTASIPSSPAAAPA. Residues 54–70 are compositionally biased toward low complexity; it reads AASSTASIPSSPAAAPA. 4 consecutive transmembrane segments (helical) span residues 373–393, 443–463, 482–502, and 512–532; these read WGWT…PLAA, LPMV…LASV, PFFI…KLNP, and VMMI…AGLV.

Belongs to the OXA1/ALB3/YidC family. Type 1 subfamily. As to quaternary structure, interacts with the Sec translocase complex via SecD. Specifically interacts with transmembrane segments of nascent integral membrane proteins during membrane integration.

The protein localises to the cell membrane. In terms of biological role, required for the insertion and/or proper folding and/or complex formation of integral membrane proteins into the membrane. Involved in integration of membrane proteins that insert both dependently and independently of the Sec translocase complex, as well as at least some lipoproteins. Aids folding of multispanning membrane proteins. This Bordetella bronchiseptica (strain ATCC BAA-588 / NCTC 13252 / RB50) (Alcaligenes bronchisepticus) protein is Membrane protein insertase YidC.